We begin with the raw amino-acid sequence, 361 residues long: D-alanine--D-alanine ligase (361 aa).

The ATP-grasp domain maps to lysine 140–alanine 345. Glutamate 173–glutamate 228 contacts ATP. Mg(2+) contacts are provided by aspartate 299, glutamate 312, and asparagine 314.

The protein belongs to the D-alanine--D-alanine ligase family. It depends on Mg(2+) as a cofactor. The cofactor is Mn(2+).

It is found in the cytoplasm. It carries out the reaction 2 D-alanine + ATP = D-alanyl-D-alanine + ADP + phosphate + H(+). It functions in the pathway cell wall biogenesis; peptidoglycan biosynthesis. Cell wall formation. This is D-alanine--D-alanine ligase from Bacillus licheniformis (strain ATCC 14580 / DSM 13 / JCM 2505 / CCUG 7422 / NBRC 12200 / NCIMB 9375 / NCTC 10341 / NRRL NRS-1264 / Gibson 46).